An 89-amino-acid chain; its full sequence is C-C motif chemokine 18 (89 aa).

The N-terminal stretch at 1–20 (MKGLAAALLVLVCTMALCSC) is a signal peptide. Intrachain disulfides connect cysteine 30–cysteine 54 and cysteine 31–cysteine 70.

Belongs to the intercrine beta (chemokine CC) family. The Cys-30/Cys-54 disulfide bond is required for activity. As to expression, expressed at high levels in lung, lymph nodes, placenta, bone marrow, dendritic cells present in germinal centers and T-cell areas of secondary lymphoid organs and macrophages derived from peripheral blood monocytes. Not expressed by peripheral blood monocytes and a monocyte-to-macrophage differentiation is a prerequisite for expression. Expressed in synovial fluids from patients with rheumatoid and septic arthritis and in ovarian carcinoma ascitic fluid.

Its subcellular location is the secreted. In terms of biological role, chemotactic factor that attracts lymphocytes but not monocytes or granulocytes. May be involved in B-cell migration into B-cell follicles in lymph nodes. Attracts naive T-lymphocytes toward dendritic cells and activated macrophages in lymph nodes, has chemotactic activity for naive T-cells, CD4+ and CD8+ T-cells and thus may play a role in both humoral and cell-mediated immunity responses. The sequence is that of C-C motif chemokine 18 (CCL18) from Homo sapiens (Human).